The primary structure comprises 211 residues: Imidazole glycerol phosphate synthase subunit HisH (211 aa).

The region spanning 1 to 211 is the Glutamine amidotransferase type-1 domain; the sequence is MIGIIDYGMG…ASIIEGKGSM (211 aa). Cysteine 79 (nucleophile) is an active-site residue. Residues histidine 186 and glutamate 188 contribute to the active site.

Heterodimer of HisH and HisF.

Its subcellular location is the cytoplasm. The enzyme catalyses 5-[(5-phospho-1-deoxy-D-ribulos-1-ylimino)methylamino]-1-(5-phospho-beta-D-ribosyl)imidazole-4-carboxamide + L-glutamine = D-erythro-1-(imidazol-4-yl)glycerol 3-phosphate + 5-amino-1-(5-phospho-beta-D-ribosyl)imidazole-4-carboxamide + L-glutamate + H(+). The catalysed reaction is L-glutamine + H2O = L-glutamate + NH4(+). The protein operates within amino-acid biosynthesis; L-histidine biosynthesis; L-histidine from 5-phospho-alpha-D-ribose 1-diphosphate: step 5/9. Its function is as follows. IGPS catalyzes the conversion of PRFAR and glutamine to IGP, AICAR and glutamate. The HisH subunit catalyzes the hydrolysis of glutamine to glutamate and ammonia as part of the synthesis of IGP and AICAR. The resulting ammonia molecule is channeled to the active site of HisF. This Geobacillus sp. (strain WCH70) protein is Imidazole glycerol phosphate synthase subunit HisH.